The sequence spans 446 residues: ATP-dependent protease ATPase subunit HslU (446 aa).

ATP contacts are provided by residues valine 18, 60 to 65 (GVGKTE), aspartate 259, glutamate 324, and arginine 396.

It belongs to the ClpX chaperone family. HslU subfamily. As to quaternary structure, a double ring-shaped homohexamer of HslV is capped on each side by a ring-shaped HslU homohexamer. The assembly of the HslU/HslV complex is dependent on binding of ATP.

It is found in the cytoplasm. ATPase subunit of a proteasome-like degradation complex; this subunit has chaperone activity. The binding of ATP and its subsequent hydrolysis by HslU are essential for unfolding of protein substrates subsequently hydrolyzed by HslV. HslU recognizes the N-terminal part of its protein substrates and unfolds these before they are guided to HslV for hydrolysis. The sequence is that of ATP-dependent protease ATPase subunit HslU from Dechloromonas aromatica (strain RCB).